We begin with the raw amino-acid sequence, 564 residues long: ATP-dependent RNA helicase ROK1 (564 aa).

Disordered stretches follow at residues 1-45 (MDIF…ESQI) and 62-87 (EDDREKTTENDSPNKEEKSGNDDGLI). Composition is skewed to basic and acidic residues over residues 13–23 (VKKESGPKAKA), 33–45 (DENHKEDNNESQI), and 62–86 (EDDREKTTENDSPNKEEKSGNDDGL). The Q motif signature appears at 122 to 150 (DLISRFSFDKRLLNNLIENGFTEPTPIQC). The 181-residue stretch at 153–333 (IPVALNNRDV…QSIMMDPVRV (181 aa)) folds into the Helicase ATP-binding domain. An ATP-binding site is contributed by 166–173 (GPTGSGKT). The DEAD box signature appears at 280–283 (DEAD). A Helicase C-terminal domain is found at 344–506 (NIEQKLIFCG…EVSEWMDKMA (163 aa)). The interval 512–564 (EKESIKNGKAHKERKQITTVPKMDKAKRRRQQEMIAASKRRKNEELSKKHFSK) is disordered. A compositionally biased stretch (basic and acidic residues) spans 553-564 (KNEELSKKHFSK).

The protein belongs to the DEAD box helicase family. DDX52/ROK1 subfamily. In terms of assembly, interacts with the U3 snoRNA and is associated with the 90S and 40S pre-ribosomes. This association requires the presence of RRP5. Also interacts with OSH3.

Its subcellular location is the nucleus. The protein localises to the nucleolus. It carries out the reaction ATP + H2O = ADP + phosphate + H(+). In terms of biological role, ATP-dependent RNA helicase involved in 40S ribosomal subunit biogenesis. Required for the processing and cleavage of 35S pre-rRNA at sites A0, A1, and A2, leading to mature 18S rRNA. May also have a gene-specific regulatory function since it affects nuclear fusion by regulating KAR4 expression and contributes with KEM1 to ISP-1 sensitivity. This is ATP-dependent RNA helicase ROK1 (ROK1) from Saccharomyces cerevisiae (strain ATCC 204508 / S288c) (Baker's yeast).